The primary structure comprises 453 residues: ACT domain-containing protein ACR3 (453 aa).

ACT domains follow at residues 37 to 112, 130 to 212, 266 to 341, and 344 to 423; these read LVKV…SASQ, SIEI…KFAR, VINV…RVSE, and SLEL…VPSR.

As to expression, expressed in roots, cotyledons, rosette and cauline leaves, sepals, style, and pedicels and tips of young developing siliques.

Its function is as follows. May bind amino acids. This chain is ACT domain-containing protein ACR3, found in Arabidopsis thaliana (Mouse-ear cress).